The chain runs to 428 residues: Trigger factor (428 aa).

The PPIase FKBP-type domain occupies 163 to 248 (GDTAIIDFEG…INDVKVKELS (86 aa)).

The protein belongs to the FKBP-type PPIase family. Tig subfamily.

The protein localises to the cytoplasm. The enzyme catalyses [protein]-peptidylproline (omega=180) = [protein]-peptidylproline (omega=0). In terms of biological role, involved in protein export. Acts as a chaperone by maintaining the newly synthesized protein in an open conformation. Functions as a peptidyl-prolyl cis-trans isomerase. The polypeptide is Trigger factor (Clostridioides difficile (strain 630) (Peptoclostridium difficile)).